Here is a 127-residue protein sequence, read N- to C-terminus: Modulator protein MzrA (127 aa).

The Cytoplasmic portion of the chain corresponds to methionine 1–arginine 10. Residues phenylalanine 11–leucine 31 traverse the membrane as a helical segment. Residues glutamate 32–glycine 127 lie on the Periplasmic side of the membrane.

It belongs to the MzrA family. In terms of assembly, interacts with EnvZ.

Its subcellular location is the cell inner membrane. Modulates the activity of the EnvZ/OmpR two-component regulatory system, probably by directly modulating EnvZ enzymatic activity and increasing stability of phosphorylated OmpR. The polypeptide is Modulator protein MzrA (Enterobacter lignolyticus (strain SCF1)).